Here is a 181-residue protein sequence, read N- to C-terminus: Probable RNA 2'-phosphotransferase (181 aa).

The protein belongs to the KptA/TPT1 family.

Its function is as follows. Removes the 2'-phosphate from RNA via an intermediate in which the phosphate is ADP-ribosylated by NAD followed by a presumed transesterification to release the RNA and generate ADP-ribose 1''-2''-cyclic phosphate (APPR&gt;P). May function as an ADP-ribosylase. The chain is Probable RNA 2'-phosphotransferase from Nostoc punctiforme (strain ATCC 29133 / PCC 73102).